The sequence spans 165 residues: Destrin (165 aa).

Ala2 is subject to N-acetylalanine. Ser3 carries the post-translational modification Phosphoserine. The region spanning 4-153 (GVQVADEVCR…NRTSIAEKLG (150 aa)) is the ADF-H domain. The residue at position 19 (Lys19) is an N6-acetyllysine. The Nuclear localization signal signature appears at 30–34 (KKRKK).

The protein belongs to the actin-binding proteins ADF family. ISGylated.

Functionally, actin-depolymerizing protein. Severs actin filaments (F-actin) and binds to actin monomers (G-actin). Acts in a pH-independent manner. This chain is Destrin (Dstn), found in Rattus norvegicus (Rat).